Here is a 280-residue protein sequence, read N- to C-terminus: Large ribosomal subunit protein uL2 (280 aa).

Disordered regions lie at residues 1–59 (MAIR…GGHK) and 223–280 (GVVM…NKKR). Composition is skewed to basic residues over residues 45–59 (VHGH…GGHK) and 269–280 (VRRRRSNKNKKR).

It belongs to the universal ribosomal protein uL2 family. As to quaternary structure, part of the 50S ribosomal subunit. Forms a bridge to the 30S subunit in the 70S ribosome.

Functionally, one of the primary rRNA binding proteins. Required for association of the 30S and 50S subunits to form the 70S ribosome, for tRNA binding and peptide bond formation. It has been suggested to have peptidyltransferase activity; this is somewhat controversial. Makes several contacts with the 16S rRNA in the 70S ribosome. This Corynebacterium jeikeium (strain K411) protein is Large ribosomal subunit protein uL2.